The sequence spans 675 residues: UvrABC system protein B (675 aa).

Residues Glu35 to Arg422 enclose the Helicase ATP-binding domain. Gly48–Thr55 serves as a coordination point for ATP. A Beta-hairpin motif is present at residues Tyr101–Ile124. The Helicase C-terminal domain occupies Gln439–Ile605. The UVR domain maps to Ala633 to Arg668.

It belongs to the UvrB family. Forms a heterotetramer with UvrA during the search for lesions. Interacts with UvrC in an incision complex.

The protein localises to the cytoplasm. In terms of biological role, the UvrABC repair system catalyzes the recognition and processing of DNA lesions. A damage recognition complex composed of 2 UvrA and 2 UvrB subunits scans DNA for abnormalities. Upon binding of the UvrA(2)B(2) complex to a putative damaged site, the DNA wraps around one UvrB monomer. DNA wrap is dependent on ATP binding by UvrB and probably causes local melting of the DNA helix, facilitating insertion of UvrB beta-hairpin between the DNA strands. Then UvrB probes one DNA strand for the presence of a lesion. If a lesion is found the UvrA subunits dissociate and the UvrB-DNA preincision complex is formed. This complex is subsequently bound by UvrC and the second UvrB is released. If no lesion is found, the DNA wraps around the other UvrB subunit that will check the other stand for damage. This chain is UvrABC system protein B, found in Bordetella bronchiseptica (strain ATCC BAA-588 / NCTC 13252 / RB50) (Alcaligenes bronchisepticus).